We begin with the raw amino-acid sequence, 85 residues long: Large ribosomal subunit protein bL27 (85 aa).

The interval 1-20 (MATKKAGGSTRNGRDSEAKR) is disordered.

This sequence belongs to the bacterial ribosomal protein bL27 family.

The sequence is that of Large ribosomal subunit protein bL27 from Histophilus somni (strain 129Pt) (Haemophilus somnus).